The primary structure comprises 450 residues: Glucose-6-phosphate isomerase (450 aa).

Position 39 is a phosphothreonine (Thr39). The Proton donor role is filled by Glu291. Residues His312 and Lys426 contribute to the active site.

This sequence belongs to the GPI family.

Its subcellular location is the cytoplasm. It carries out the reaction alpha-D-glucose 6-phosphate = beta-D-fructose 6-phosphate. Its pathway is carbohydrate biosynthesis; gluconeogenesis. It participates in carbohydrate degradation; glycolysis; D-glyceraldehyde 3-phosphate and glycerone phosphate from D-glucose: step 2/4. Catalyzes the reversible isomerization of glucose-6-phosphate to fructose-6-phosphate. The sequence is that of Glucose-6-phosphate isomerase from Bacillus thuringiensis (strain Al Hakam).